The following is a 425-amino-acid chain: Tyrosine--tRNA ligase (425 aa).

Residue Tyr-37 participates in L-tyrosine binding. The short motif at 42 to 51 (PTADSLHLGH) is the 'HIGH' region element. Tyr-175 and Gln-179 together coordinate L-tyrosine. The 'KMSKS' region motif lies at 235–239 (KFGKT). Lys-238 serves as a coordination point for ATP. Residues 357–415 (QDLQQALVNAELAPSRGQARKLIEAKSVSINGSLQTDAEYTFGEDDRLFGQYTLLRRGK) form the S4 RNA-binding domain.

It belongs to the class-I aminoacyl-tRNA synthetase family. TyrS type 1 subfamily. As to quaternary structure, homodimer.

The protein resides in the cytoplasm. The enzyme catalyses tRNA(Tyr) + L-tyrosine + ATP = L-tyrosyl-tRNA(Tyr) + AMP + diphosphate + H(+). Catalyzes the attachment of tyrosine to tRNA(Tyr) in a two-step reaction: tyrosine is first activated by ATP to form Tyr-AMP and then transferred to the acceptor end of tRNA(Tyr). In Erwinia tasmaniensis (strain DSM 17950 / CFBP 7177 / CIP 109463 / NCPPB 4357 / Et1/99), this protein is Tyrosine--tRNA ligase.